The chain runs to 150 residues: Viral late gene transcription factor 2 (150 aa).

The protein belongs to the orthopoxvirus VLTF-2/OPG126 family. Interacts with itself. Interacts with the late transcription factors VLTF-1/OPG093.

In terms of biological role, acts with RNA polymerase to initiate transcription from late gene promoters. The sequence is that of Viral late gene transcription factor 2 (OPG126) from Vaccinia virus (strain Copenhagen) (VACV).